The primary structure comprises 269 residues: Eukaryotic translation initiation factor 3 subunit G-1 (269 aa).

The RRM domain maps to 188–266; that stretch reads AAIRISNLSE…LILSVEWSKP (79 aa).

This sequence belongs to the eIF-3 subunit G family. In terms of assembly, component of the eukaryotic translation initiation factor 3 (eIF-3) complex. The eIF-3 complex interacts with pix.

It is found in the cytoplasm. Functionally, RNA-binding component of the eukaryotic translation initiation factor 3 (eIF-3) complex, which is involved in protein synthesis of a specialized repertoire of mRNAs and, together with other initiation factors, stimulates binding of mRNA and methionyl-tRNAi to the 40S ribosome. The eIF-3 complex specifically targets and initiates translation of a subset of mRNAs involved in cell proliferation. This subunit can bind 18S rRNA. The protein is Eukaryotic translation initiation factor 3 subunit G-1 of Drosophila grimshawi (Hawaiian fruit fly).